The following is a 227-amino-acid chain: Orotate phosphoribosyltransferase (227 aa).

5-phospho-alpha-D-ribose 1-diphosphate contacts are provided by Lys-51, Arg-119, Lys-120, and Lys-123. Orotate is bound by residues Thr-149 and Arg-177.

This sequence belongs to the purine/pyrimidine phosphoribosyltransferase family. PyrE subfamily. As to quaternary structure, homodimer. As to expression, expressed in body wall muscles, spermatheca and vulva muscles.

The catalysed reaction is orotidine 5'-phosphate + diphosphate = orotate + 5-phospho-alpha-D-ribose 1-diphosphate. It carries out the reaction UMP + diphosphate = 5-phospho-alpha-D-ribose 1-diphosphate + uracil. Its pathway is pyrimidine metabolism; UMP biosynthesis via de novo pathway; UMP from orotate: step 1/2. It functions in the pathway pyrimidine metabolism; UMP biosynthesis via salvage pathway; UMP from uracil: step 1/1. In terms of biological role, phosphoribosyltransferase which catalyzes the formation of UMP from uracil in vitro and thus may be involved in UMP biosynthesis via the salvage pathway. May also participate in the first step of UMP synthesis by catalyzing the formation of orotidine 5'-phosphate, a UMP precursor, from orotate. The polypeptide is Orotate phosphoribosyltransferase (Caenorhabditis elegans).